The primary structure comprises 145 residues: Thioredoxin C-3 (145 aa).

The heme site is built by Cys-25, Cys-28, and His-29. A Thioredoxin domain is found at 29–140 (HQALLPLEPI…LQQWLDQQLQ (112 aa)). Cysteines 65 and 68 form a disulfide.

Belongs to the thioredoxin family.

Functionally, participates in various redox reactions through the reversible oxidation of its active center dithiol to a disulfide and catalyzes dithiol-disulfide exchange reactions. This Corynebacterium nephridii protein is Thioredoxin C-3.